Here is an 84-residue protein sequence, read N- to C-terminus: Mu-Sparatoxin-Hp1 (84 aa).

A signal peptide spans 1–20 (MKIAIVMTLLLVAFSTASFA). Residues 21–35 (IEPIERAALDLVMAR) constitute a propeptide that is removed on maturation. 3 disulfide bridges follow: cysteine 54/cysteine 68, cysteine 61/cysteine 73, and cysteine 67/cysteine 78. Leucine 82 carries the leucine amide modification.

As to expression, expressed by the venom gland.

Its subcellular location is the secreted. Weakly nhibits voltage-gated sodium channels Nav1.7/SCN9A. High concentration of the toxin (3 uM) inhibits Nav1.7/SCN9A currents by 79%. The chain is Mu-Sparatoxin-Hp1 from Heteropoda pingtungensis (Pingtung huntsman spider).